The following is a 121-amino-acid chain: Small ribosomal subunit protein uS13 (121 aa).

A disordered region spans residues 93-121 (KGLPLRGQKTKTNARTRKGPKKTIANKKK).

It belongs to the universal ribosomal protein uS13 family. In terms of assembly, part of the 30S ribosomal subunit. Forms a loose heterodimer with protein S19. Forms two bridges to the 50S subunit in the 70S ribosome.

In terms of biological role, located at the top of the head of the 30S subunit, it contacts several helices of the 16S rRNA. In the 70S ribosome it contacts the 23S rRNA (bridge B1a) and protein L5 of the 50S subunit (bridge B1b), connecting the 2 subunits; these bridges are implicated in subunit movement. Contacts the tRNAs in the A and P-sites. In Clostridium perfringens (strain ATCC 13124 / DSM 756 / JCM 1290 / NCIMB 6125 / NCTC 8237 / Type A), this protein is Small ribosomal subunit protein uS13.